Here is a 157-residue protein sequence, read N- to C-terminus: 3-dehydroquinate dehydratase (157 aa).

Tyr22 serves as the catalytic Proton acceptor. The substrate site is built by Asn73, His79, and Asp86. The active-site Proton donor is His99. Substrate-binding positions include 100-101 and Arg110; that span reads LS.

It belongs to the type-II 3-dehydroquinase family. In terms of assembly, homododecamer.

It catalyses the reaction 3-dehydroquinate = 3-dehydroshikimate + H2O. Its pathway is metabolic intermediate biosynthesis; chorismate biosynthesis; chorismate from D-erythrose 4-phosphate and phosphoenolpyruvate: step 3/7. In terms of biological role, catalyzes a trans-dehydration via an enolate intermediate. This chain is 3-dehydroquinate dehydratase, found in Roseiflexus castenholzii (strain DSM 13941 / HLO8).